Reading from the N-terminus, the 541-residue chain is uncharacterized protein (541 aa).

The next 12 membrane-spanning stretches (helical) occupy residues 99 to 119 (WIVV…SSVY), 131 to 153 (GVSI…FGSL), 165 to 185 (FVVY…GGCA), 187 to 207 (NIWT…TPLS), 224 to 244 (YVLP…PIIG), 256 to 276 (WVFW…FFFM), 325 to 345 (LLIT…VYII), 367 to 387 (IGLS…CTPI), 409 to 429 (LYPL…FAWT), 439 to 459 (WIVP…VFFV), 472 to 494 (AASA…SLVG), and 508 to 528 (SLLG…FIYG).

Belongs to the major facilitator superfamily. CAR1 family.

The protein resides in the membrane. This is an uncharacterized protein from Schizosaccharomyces pombe (strain 972 / ATCC 24843) (Fission yeast).